The following is a 246-amino-acid chain: Bis(5'-nucleosyl)-tetraphosphatase PrpE [asymmetrical] (246 aa).

The protein belongs to the PrpE family. Ni(2+) is required as a cofactor.

It catalyses the reaction P(1),P(4)-bis(5'-guanosyl) tetraphosphate + H2O = GMP + GTP + 2 H(+). Its function is as follows. Asymmetrically hydrolyzes Ap4p to yield AMP and ATP. The chain is Bis(5'-nucleosyl)-tetraphosphatase PrpE [asymmetrical] from Bacillus cereus (strain B4264).